Here is a 203-residue protein sequence, read N- to C-terminus: Small ribosomal subunit protein uS4c (203 aa).

An S4 RNA-binding domain is found at 92 to 150 (MRLDNIIYRLGMAPTIANARQLVNHGHIVVNDRIVTIPSYRCKPKDIISVRNNSTSRNV).

It belongs to the universal ribosomal protein uS4 family. As to quaternary structure, part of the 30S ribosomal subunit. Contacts protein S5. The interaction surface between S4 and S5 is involved in control of translational fidelity.

It localises to the plastid. The protein resides in the chloroplast. One of the primary rRNA binding proteins, it binds directly to 16S rRNA where it nucleates assembly of the body of the 30S subunit. In terms of biological role, with S5 and S12 plays an important role in translational accuracy. This is Small ribosomal subunit protein uS4c (rps4) from Chlorokybus atmophyticus (Soil alga).